The following is a 248-amino-acid chain: UDP-2,3-diacylglucosamine hydrolase (248 aa).

Aspartate 7, histidine 9, aspartate 40, asparagine 78, and histidine 113 together coordinate Mn(2+). 78–79 (NR) contacts substrate. Substrate-binding residues include aspartate 121, serine 159, threonine 163, lysine 166, and histidine 194. Mn(2+)-binding residues include histidine 194 and histidine 196.

This sequence belongs to the LpxH family. Mn(2+) is required as a cofactor.

It localises to the cell inner membrane. The enzyme catalyses UDP-2-N,3-O-bis[(3R)-3-hydroxytetradecanoyl]-alpha-D-glucosamine + H2O = 2-N,3-O-bis[(3R)-3-hydroxytetradecanoyl]-alpha-D-glucosaminyl 1-phosphate + UMP + 2 H(+). It functions in the pathway glycolipid biosynthesis; lipid IV(A) biosynthesis; lipid IV(A) from (3R)-3-hydroxytetradecanoyl-[acyl-carrier-protein] and UDP-N-acetyl-alpha-D-glucosamine: step 4/6. Its function is as follows. Hydrolyzes the pyrophosphate bond of UDP-2,3-diacylglucosamine to yield 2,3-diacylglucosamine 1-phosphate (lipid X) and UMP by catalyzing the attack of water at the alpha-P atom. Involved in the biosynthesis of lipid A, a phosphorylated glycolipid that anchors the lipopolysaccharide to the outer membrane of the cell. This is UDP-2,3-diacylglucosamine hydrolase from Pseudomonas fluorescens (strain Pf0-1).